The following is a 288-amino-acid chain: ATP synthase gamma chain (288 aa).

Belongs to the ATPase gamma chain family. In terms of assembly, F-type ATPases have 2 components, CF(1) - the catalytic core - and CF(0) - the membrane proton channel. CF(1) has five subunits: alpha(3), beta(3), gamma(1), delta(1), epsilon(1). CF(0) has three main subunits: a, b and c.

The protein resides in the cell inner membrane. Its function is as follows. Produces ATP from ADP in the presence of a proton gradient across the membrane. The gamma chain is believed to be important in regulating ATPase activity and the flow of protons through the CF(0) complex. In Rickettsia prowazekii (strain Madrid E), this protein is ATP synthase gamma chain.